We begin with the raw amino-acid sequence, 532 residues long: Probable cytochrome P450 524A1 (532 aa).

Residues 8–28 form a helical membrane-spanning segment; the sequence is FIIFILLAALAVFVSEATSKV. C478 lines the heme pocket.

This sequence belongs to the cytochrome P450 family. The cofactor is heme.

It localises to the membrane. In Dictyostelium discoideum (Social amoeba), this protein is Probable cytochrome P450 524A1 (cyp524A1).